A 293-amino-acid polypeptide reads, in one-letter code: NAD kinase (293 aa).

The active-site Proton acceptor is the aspartate 68. Residues 68–69 (DG), 142–143 (ND), arginine 153, aspartate 172, and 183–188 (TAYSLS) each bind NAD(+).

The protein belongs to the NAD kinase family. The cofactor is a divalent metal cation.

The protein resides in the cytoplasm. It carries out the reaction NAD(+) + ATP = ADP + NADP(+) + H(+). In terms of biological role, involved in the regulation of the intracellular balance of NAD and NADP, and is a key enzyme in the biosynthesis of NADP. Catalyzes specifically the phosphorylation on 2'-hydroxyl of the adenosine moiety of NAD to yield NADP. The chain is NAD kinase from Lachnospira eligens (strain ATCC 27750 / DSM 3376 / VPI C15-48 / C15-B4) (Eubacterium eligens).